A 297-amino-acid polypeptide reads, in one-letter code: GTP cyclohydrolase FolE2 (297 aa).

It belongs to the GTP cyclohydrolase IV family.

It catalyses the reaction GTP + H2O = 7,8-dihydroneopterin 3'-triphosphate + formate + H(+). The protein operates within cofactor biosynthesis; 7,8-dihydroneopterin triphosphate biosynthesis; 7,8-dihydroneopterin triphosphate from GTP: step 1/1. Functionally, converts GTP to 7,8-dihydroneopterin triphosphate. This Pseudomonas fluorescens (strain ATCC BAA-477 / NRRL B-23932 / Pf-5) protein is GTP cyclohydrolase FolE2.